A 218-amino-acid polypeptide reads, in one-letter code: UPF0177 protein YaiF (218 aa).

The next 5 helical transmembrane spans lie at 8–28, 48–68, 81–101, 123–143, and 163–183; these read SIIIATAFFLFILSQLPAVFL, FIILTLVVVTICIFIGIKCGF, ILLIFSLLIITFFIQKFVVQF, ILSSLLFPGQFVAVSILAPIL, and FFLSCFFFSYVHSGFSWDILG.

The protein belongs to the UPF0177 family.

The protein localises to the cell membrane. This chain is UPF0177 protein YaiF (yaiF), found in Lactococcus lactis subsp. lactis (strain IL1403) (Streptococcus lactis).